The primary structure comprises 118 residues: Beta-2-microglobulin (118 aa).

Residues 1–20 form the signal peptide; sequence MARFVVLVLLGLLYLSHLDA. An Ig-like C1-type domain is found at 25–113; the sequence is PKVQVYSRHP…TTLSEPKVVK (89 aa). A disulfide bridge connects residues cysteine 45 and cysteine 99.

It belongs to the beta-2-microglobulin family. Heterodimer of an alpha chain and a beta chain. Beta-2-microglobulin is the beta-chain of major histocompatibility complex class I molecules.

It is found in the secreted. Its function is as follows. Component of the class I major histocompatibility complex (MHC). Involved in the presentation of peptide antigens to the immune system. This Felis catus (Cat) protein is Beta-2-microglobulin (B2M).